We begin with the raw amino-acid sequence, 217 residues long: Ras-related protein Rab-19 (217 aa).

Residues S26, V28, G29, K30, T31, C32, Y42, T43, E44, T45, and T49 each contribute to the GTP site. Position 31 (T31) interacts with Mg(2+). The Switch 1 motif lies at 39-54 (SGVYTETQQNTIGVDF). Mg(2+) is bound by residues T49 and D72. Positions 74–89 (AGQERFRTITQSYYRS) match the Switch 2 motif. G75, N130, K131, D133, S161, A162, and K163 together coordinate GTP. 2 S-geranylgeranyl cysteine lipidation sites follow: C215 and C217. C217 bears the Cysteine methyl ester mark.

This sequence belongs to the small GTPase superfamily. Rab family. Mg(2+) serves as cofactor.

It is found in the cell membrane. The enzyme catalyses GTP + H2O = GDP + phosphate + H(+). With respect to regulation, regulated by guanine nucleotide exchange factors (GEFs) which promote the exchange of bound GDP for free GTP. Regulated by GTPase activating proteins (GAPs) which increase the GTP hydrolysis activity. Inhibited by GDP dissociation inhibitors (GDIs). Its function is as follows. The small GTPases Rab are key regulators of intracellular membrane trafficking, from the formation of transport vesicles to their fusion with membranes. Rabs cycle between an inactive GDP-bound form and an active GTP-bound form that is able to recruit to membranes different set of downstream effectors directly responsible for vesicle formation, movement, tethering and fusion. The polypeptide is Ras-related protein Rab-19 (Homo sapiens (Human)).